The chain runs to 137 residues: Large ribosomal subunit protein uL16 (137 aa).

It belongs to the universal ribosomal protein uL16 family. As to quaternary structure, part of the 50S ribosomal subunit.

Functionally, binds 23S rRNA and is also seen to make contacts with the A and possibly P site tRNAs. In Sorangium cellulosum (strain So ce56) (Polyangium cellulosum (strain So ce56)), this protein is Large ribosomal subunit protein uL16.